The following is a 272-amino-acid chain: ATP synthase subunit a (272 aa).

6 helical membrane-spanning segments follow: residues 41–61 (VLNI…LSIF), 110–130 (FVWV…FPFI), 143–165 (VPSA…ILFY), 188–208 (VFFI…PISL), 222–242 (IFIL…NVPW), and 243–263 (AIFH…LTIV).

Belongs to the ATPase A chain family. As to quaternary structure, F-type ATPases have 2 components, CF(1) - the catalytic core - and CF(0) - the membrane proton channel. CF(1) has five subunits: alpha(3), beta(3), gamma(1), delta(1), epsilon(1). CF(0) has three main subunits: a(1), b(2) and c(9-12). The alpha and beta chains form an alternating ring which encloses part of the gamma chain. CF(1) is attached to CF(0) by a central stalk formed by the gamma and epsilon chains, while a peripheral stalk is formed by the delta and b chains.

It localises to the cell membrane. Its function is as follows. Key component of the proton channel; it plays a direct role in the translocation of protons across the membrane. This is ATP synthase subunit a from Buchnera aphidicola subsp. Schizaphis graminum (strain Sg).